Consider the following 697-residue polypeptide: DNA ligase (697 aa).

NAD(+) is bound by residues 36 to 40 (DAEYD), 85 to 86 (SL), and Glu123. Lys125 serves as the catalytic N6-AMP-lysine intermediate. NAD(+) contacts are provided by Arg146, Glu182, Lys320, and Lys344. 4 residues coordinate Zn(2+): Cys438, Cys441, Cys456, and Cys462. Residues 619–697 (PQGNTLAGKT…EDGLKALLGV (79 aa)) enclose the BRCT domain.

The protein belongs to the NAD-dependent DNA ligase family. LigA subfamily. Mg(2+) is required as a cofactor. It depends on Mn(2+) as a cofactor.

It carries out the reaction NAD(+) + (deoxyribonucleotide)n-3'-hydroxyl + 5'-phospho-(deoxyribonucleotide)m = (deoxyribonucleotide)n+m + AMP + beta-nicotinamide D-nucleotide.. Functionally, DNA ligase that catalyzes the formation of phosphodiester linkages between 5'-phosphoryl and 3'-hydroxyl groups in double-stranded DNA using NAD as a coenzyme and as the energy source for the reaction. It is essential for DNA replication and repair of damaged DNA. The sequence is that of DNA ligase from Bordetella petrii (strain ATCC BAA-461 / DSM 12804 / CCUG 43448).